We begin with the raw amino-acid sequence, 426 residues long: Glutamate-1-semialdehyde 2,1-aminomutase (426 aa).

K265 bears the N6-(pyridoxal phosphate)lysine mark.

The protein belongs to the class-III pyridoxal-phosphate-dependent aminotransferase family. HemL subfamily. Homodimer. Pyridoxal 5'-phosphate serves as cofactor.

It is found in the cytoplasm. It carries out the reaction (S)-4-amino-5-oxopentanoate = 5-aminolevulinate. The protein operates within porphyrin-containing compound metabolism; protoporphyrin-IX biosynthesis; 5-aminolevulinate from L-glutamyl-tRNA(Glu): step 2/2. The sequence is that of Glutamate-1-semialdehyde 2,1-aminomutase from Akkermansia muciniphila (strain ATCC BAA-835 / DSM 22959 / JCM 33894 / BCRC 81048 / CCUG 64013 / CIP 107961 / Muc).